The primary structure comprises 136 residues: Protein NrdI (136 aa).

The protein belongs to the NrdI family.

Functionally, probably involved in ribonucleotide reductase function. The polypeptide is Protein NrdI (Salmonella paratyphi B (strain ATCC BAA-1250 / SPB7)).